We begin with the raw amino-acid sequence, 238 residues long: Uridylate kinase (238 aa).

Residue 12–15 (KLSG) coordinates ATP. Gly54 lines the UMP pocket. ATP-binding residues include Gly55 and Arg59. UMP is bound by residues Asp74 and 135 to 142 (TGNPYFTT). 3 residues coordinate ATP: Thr162, Tyr168, and Asp171.

Belongs to the UMP kinase family. As to quaternary structure, homohexamer.

The protein localises to the cytoplasm. It catalyses the reaction UMP + ATP = UDP + ADP. The protein operates within pyrimidine metabolism; CTP biosynthesis via de novo pathway; UDP from UMP (UMPK route): step 1/1. Its activity is regulated as follows. Inhibited by UTP. Functionally, catalyzes the reversible phosphorylation of UMP to UDP. In Oleidesulfovibrio alaskensis (strain ATCC BAA-1058 / DSM 17464 / G20) (Desulfovibrio alaskensis), this protein is Uridylate kinase.